We begin with the raw amino-acid sequence, 283 residues long: 4-diphosphocytidyl-2-C-methyl-D-erythritol kinase (283 aa).

The active site involves Lys-10. 99-109 (PMGGGLGGGSS) contributes to the ATP binding site. The active site involves Asp-141.

It belongs to the GHMP kinase family. IspE subfamily. As to quaternary structure, homodimer.

The catalysed reaction is 4-CDP-2-C-methyl-D-erythritol + ATP = 4-CDP-2-C-methyl-D-erythritol 2-phosphate + ADP + H(+). The protein operates within isoprenoid biosynthesis; isopentenyl diphosphate biosynthesis via DXP pathway; isopentenyl diphosphate from 1-deoxy-D-xylulose 5-phosphate: step 3/6. In terms of biological role, catalyzes the phosphorylation of the position 2 hydroxy group of 4-diphosphocytidyl-2C-methyl-D-erythritol. The protein is 4-diphosphocytidyl-2-C-methyl-D-erythritol kinase of Salmonella choleraesuis (strain SC-B67).